A 392-amino-acid chain; its full sequence is L-rhamnonate dehydratase (392 aa).

Substrate-binding residues include H22 and R48. 3 residues coordinate Mg(2+): D214, E240, and E268. H318 functions as the Proton acceptor in the catalytic mechanism. A substrate-binding site is contributed by E338.

It belongs to the mandelate racemase/muconate lactonizing enzyme family. RhamD subfamily. In terms of assembly, homooctamer; tetramer of dimers. Requires Mg(2+) as cofactor.

The catalysed reaction is L-rhamnonate = 2-dehydro-3-deoxy-L-rhamnonate + H2O. In terms of biological role, catalyzes the dehydration of L-rhamnonate to 2-keto-3-deoxy-L-rhamnonate (KDR). The sequence is that of L-rhamnonate dehydratase from Burkholderia ambifaria (strain MC40-6).